We begin with the raw amino-acid sequence, 578 residues long: Acyl-CoA ligase AFT1-1 (578 aa).

ATP is bound by residues 210–218 (SSGTSGAQK), 350–355 (QCYGAT), Asp438, Arg457, and Lys554. The SBD1 stretch occupies residues 281–350 (GVEDLLSIVE…RHHPTWKIKQ (70 aa)). The segment at 351–413 (CYGATEAGTA…VSSPSLAIGY (63 aa)) is SBD2. The Peroxisomal targeting signal type 1 signature appears at 576 to 578 (SKI).

Belongs to the ATP-dependent AMP-binding enzyme family.

The protein resides in the peroxisome. The protein operates within mycotoxin biosynthesis. Functionally, acyl-CoA ligase; part of the gene clusters that mediate the biosynthesis of the host-selective toxins (HSTs) AF-toxins responsible for Alternaria black spot of strawberry disease by the strawberry pathotype. AF-toxin I and III are valine derivatives of 2,3-dyhydroxy-isovaleric acid and 2-hydroxy-isovaleric acid respectively, while AF II is an isoleucine derivative of 2-hydroxy-valeric acid. These derivatives are bound to a 9,10-epoxy-8-hydroxy-9-methyl-decatrienoic acid (EDA) moiety. On cellular level, AF-toxins affect plasma membrane of susceptible cells and cause a sudden increase in loss of K(+) after a few minutes of toxin treatment. The aldo-keto reductase AFTS1 catalyzes the conversion of 2-keto-isovaleric acid (2-KIV) to 2-hydroxy-isovaleric acid (2-HIV) by reduction of its ketone to an alcohol. The acyl-CoA ligase AFT1, the hydrolase AFT2 and the enoyl-CoA hydratases AFT3 and AFT6, but also the polyketide synthase AFT9, the acyl-CoA dehydrogenase AFT10, the cytochrome P450 monooxygenase AFT11 and the oxidoreductase AFT12 are all involved in the biosynthesis of the AK-, AF- and ACT-toxin common EDA structural moiety. The exact role of each enzyme, and of additional enzymes identified within the AF-toxin clusters have still to be determined. The chain is Acyl-CoA ligase AFT1-1 from Alternaria alternata (Alternaria rot fungus).